The following is a 277-amino-acid chain: Small ribosomal subunit protein uS2 (277 aa).

Residues 254-277 are disordered; sequence LAGAGSSALNDSGADLSEANPTEA.

This sequence belongs to the universal ribosomal protein uS2 family.

The protein is Small ribosomal subunit protein uS2 (rpsB) of Mycobacterium leprae (strain TN).